The primary structure comprises 216 residues: Octanoyltransferase (216 aa).

The region spanning 32–207 (SDSQDELWIV…TFSQIMGYQQ (176 aa)) is the BPL/LPL catalytic domain. Residues 71-78 (RGGQVTYH), 138-140 (SLG), and 151-153 (GLA) each bind substrate. The active-site Acyl-thioester intermediate is the Cys169.

The protein belongs to the LipB family.

It is found in the cytoplasm. It carries out the reaction octanoyl-[ACP] + L-lysyl-[protein] = N(6)-octanoyl-L-lysyl-[protein] + holo-[ACP] + H(+). Its pathway is protein modification; protein lipoylation via endogenous pathway; protein N(6)-(lipoyl)lysine from octanoyl-[acyl-carrier-protein]: step 1/2. Its function is as follows. Catalyzes the transfer of endogenously produced octanoic acid from octanoyl-acyl-carrier-protein onto the lipoyl domains of lipoate-dependent enzymes. Lipoyl-ACP can also act as a substrate although octanoyl-ACP is likely to be the physiological substrate. In Shewanella frigidimarina (strain NCIMB 400), this protein is Octanoyltransferase.